Reading from the N-terminus, the 69-residue chain is UPF0337 protein DIP1660 (69 aa).

2 stretches are compositionally biased toward basic and acidic residues: residues 1–19 (MSDFENKIEELGGKAKEAV) and 30–41 (DEGRADQTKADV). The tract at residues 1–42 (MSDFENKIEELGGKAKEAVGEATENEQLADEGRADQTKADVK) is disordered.

Belongs to the UPF0337 (CsbD) family.

In Corynebacterium diphtheriae (strain ATCC 700971 / NCTC 13129 / Biotype gravis), this protein is UPF0337 protein DIP1660.